The chain runs to 840 residues: V-type proton ATPase 116 kDa subunit a 4 (840 aa).

Residues 1-390 lie on the Cytoplasmic side of the membrane; it reads MVSVFRSEEM…DAYGVGSYRE (390 aa). The helical transmembrane segment at 391–409 threads the bilayer; the sequence is INPAPYTIITFPFLFAVMF. Residues 410-411 are Vacuolar-facing; sequence GD. A helical membrane pass occupies residues 412–428; it reads CGHGTVMLLAALWMILN. Topologically, residues 429 to 443 are cytoplasmic; that stretch reads ERRLLSQKTDNEIWN. Residues 444 to 473 form a helical membrane-spanning segment; that stretch reads TFFHGRYLILLMGIFSIYTGLIYNDCFSKS. At 474–538 the chain is on the vacuolar side; sequence LNIFGSSWSV…ASNKLTFLNS (65 aa). A helical transmembrane segment spans residues 539–558; sequence YKMKMSVILGIVQMVFGVIL. Residues 559–576 are Cytoplasmic-facing; it reads SLFNHIYFRRTLNIILQF. A helical transmembrane segment spans residues 577-597; that stretch reads IPEMIFILCLFGYLVFMIIFK. Topologically, residues 598-642 are vacuolar; sequence WCCFDVHVSQHAPSILIHFINMFLFNYSDSSNAPLYKHQQEVQSF. A helical membrane pass occupies residues 643-662; sequence FVVMALISVPWMLLIKPFIL. Over 663 to 727 the chain is Cytoplasmic; that stretch reads RASHRKSQLQ…DVFVHQAIHT (65 aa). The segment at 675–704 is disordered; the sequence is RIQEDATENIEGDSSSPSSRSGQRTSADTH. A helical membrane pass occupies residues 728–752; the sequence is IEYCLGCISNTASYLRLWALSLAHA. The Vacuolar portion of the chain corresponds to 753 to 773; sequence QLSEVLWTMVMNSGLQTRGWG. A helical membrane pass occupies residues 774–812; the sequence is GIVGVFIIFAVFAVLTVAILLIMEGLSAFLHALRLHWVE. Topologically, residues 813-840 are cytoplasmic; the sequence is FQNKFYVGDGYKFSPFSFKHILDGTAEE.

It belongs to the V-ATPase 116 kDa subunit family. V-ATPase is a heteromultimeric enzyme made up of two complexes: the ATP-hydrolytic V1 complex and the proton translocation V0 complex. The V1 complex consists of three catalytic AB heterodimers that form a heterohexamer, three peripheral stalks each consisting of EG heterodimers, one central rotor including subunits D and F, and the regulatory subunits C and H. The proton translocation complex V0 consists of the proton transport subunit a, a ring of proteolipid subunits c9c'', rotary subunit d, subunits e and f, and the accessory subunits ATP6AP1/Ac45 and ATP6AP2/PRR. Interacts with the V1 complex V-ATPase subunit A ATP6V1A. Interacts with the V0 complex V-ATPase subunit c ATP6V0C. In terms of tissue distribution, expressed in adult and fetal kidney. Found in the inner ear.

Its subcellular location is the apical cell membrane. It is found in the basolateral cell membrane. Functionally, subunit of the V0 complex of vacuolar(H+)-ATPase (V-ATPase), a multisubunit enzyme composed of a peripheral complex (V1) that hydrolyzes ATP and a membrane integral complex (V0) that translocates protons. V-ATPase is responsible for acidifying and maintaining the pH of intracellular compartments and in some cell types, is targeted to the plasma membrane, where it is responsible for acidifying the extracellular environment. Involved in normal vectorial acid transport into the urine by the kidney. This chain is V-type proton ATPase 116 kDa subunit a 4 (ATP6V0A4), found in Homo sapiens (Human).